Reading from the N-terminus, the 430-residue chain is Enolase (430 aa).

Position 163 (Gln163) interacts with (2R)-2-phosphoglycerate. The Proton donor role is filled by Glu205. Asp242, Glu288, and Asp315 together coordinate Mg(2+). (2R)-2-phosphoglycerate is bound by residues Lys340, Arg369, Ser370, and Lys391. Lys340 (proton acceptor) is an active-site residue.

This sequence belongs to the enolase family. Requires Mg(2+) as cofactor.

It is found in the cytoplasm. The protein resides in the secreted. It localises to the cell surface. It carries out the reaction (2R)-2-phosphoglycerate = phosphoenolpyruvate + H2O. Its pathway is carbohydrate degradation; glycolysis; pyruvate from D-glyceraldehyde 3-phosphate: step 4/5. In terms of biological role, catalyzes the reversible conversion of 2-phosphoglycerate (2-PG) into phosphoenolpyruvate (PEP). It is essential for the degradation of carbohydrates via glycolysis. This chain is Enolase, found in Phytoplasma australiense.